Reading from the N-terminus, the 94-residue chain is MLKPLGDRVVIRVAKEEEKTVGGIVLASVAKEKPQTGEVIAVGEGRVLENGTKVPMEVKIGDTVMFEKYSGTEVKYEGVEYLIVSAKDIIATVE.

This sequence belongs to the GroES chaperonin family. As to quaternary structure, heptamer of 7 subunits arranged in a ring. Interacts with the chaperonin GroEL.

The protein resides in the cytoplasm. Together with the chaperonin GroEL, plays an essential role in assisting protein folding. The GroEL-GroES system forms a nano-cage that allows encapsulation of the non-native substrate proteins and provides a physical environment optimized to promote and accelerate protein folding. GroES binds to the apical surface of the GroEL ring, thereby capping the opening of the GroEL channel. In Enterococcus faecalis (strain ATCC 700802 / V583), this protein is Co-chaperonin GroES.